A 545-amino-acid polypeptide reads, in one-letter code: Glucans biosynthesis protein G (545 aa).

Positions 1–34 are cleaved as a signal peptide; that stretch reads MVSLLRCQSFKPSSSLICSLALSAAFALSSSAFA. The tract at residues 38–60 is disordered; it reads KPAENKPATPVVSPPKATAQPAN.

It belongs to the OpgD/OpgG family.

The protein localises to the periplasm. It participates in glycan metabolism; osmoregulated periplasmic glucan (OPG) biosynthesis. Involved in the biosynthesis of osmoregulated periplasmic glucans (OPGs). The sequence is that of Glucans biosynthesis protein G from Shewanella sp. (strain MR-4).